Reading from the N-terminus, the 99-residue chain is Transcriptional regulator WhiB2 (99 aa).

One can recognise a 4Fe-4S Wbl-type domain in the interval 33–90 (LCAQTDPEAFFPEKGGSTRDAKRVCAKCEVREQCLKWAIDHDERFGIWGGMSERERRR). 4 residues coordinate [4Fe-4S] cluster: Cys-34, Cys-57, Cys-60, and Cys-66.

It belongs to the WhiB family. Requires [4Fe-4S] cluster as cofactor. Post-translationally, the Fe-S cluster can be nitrosylated by nitric oxide (NO). Upon Fe-S cluster removal intramolecular disulfide bonds are formed.

It localises to the cytoplasm. Acts as a transcriptional regulator. Probably redox-responsive. The apo- but not holo-form probably binds DNA. This chain is Transcriptional regulator WhiB2 (whiB2), found in Bifidobacterium longum (strain NCC 2705).